A 20-amino-acid chain; its full sequence is Phylloseptin-O1 (20 aa).

Position 20 is a glycine amide (G20).

As to expression, expressed by the skin glands.

It is found in the secreted. Functionally, has antiprotozoal activity against T.cruzi. This Pithecopus oreades (Orange-legged leaf frog) protein is Phylloseptin-O1 (psn4).